The primary structure comprises 213 residues: Peptidyl-tRNA hydrolase (213 aa).

Y26 provides a ligand contact to tRNA. The Proton acceptor role is filled by H31. Positions 78, 80, and 126 each coordinate tRNA.

Belongs to the PTH family. As to quaternary structure, monomer.

It localises to the cytoplasm. It catalyses the reaction an N-acyl-L-alpha-aminoacyl-tRNA + H2O = an N-acyl-L-amino acid + a tRNA + H(+). Its function is as follows. Hydrolyzes ribosome-free peptidyl-tRNAs (with 1 or more amino acids incorporated), which drop off the ribosome during protein synthesis, or as a result of ribosome stalling. In terms of biological role, catalyzes the release of premature peptidyl moieties from peptidyl-tRNA molecules trapped in stalled 50S ribosomal subunits, and thus maintains levels of free tRNAs and 50S ribosomes. The chain is Peptidyl-tRNA hydrolase from Trichormus variabilis (strain ATCC 29413 / PCC 7937) (Anabaena variabilis).